The following is a 57-amino-acid chain: UPF0391 membrane protein XC_2938 (57 aa).

The next 2 helical transmembrane spans lie at 4–24 (WAIIFAIIGLIAGALGFGGMA) and 33–53 (FLFWAGIIIAIVLFVLGMTIA).

This sequence belongs to the UPF0391 family.

It localises to the cell membrane. The chain is UPF0391 membrane protein XC_2938 from Xanthomonas campestris pv. campestris (strain 8004).